A 154-amino-acid polypeptide reads, in one-letter code: Myoglobin (154 aa).

The region spanning 2 to 148 is the Globin domain; that stretch reads GLSDGEWQLV…FRNDMAAKYK (147 aa). Phosphoserine is present on Ser-4. His-65 lines the nitrite pocket. Position 65 (His-65) interacts with O2. At Thr-68 the chain carries Phosphothreonine. His-94 is a binding site for heme b.

Belongs to the globin family. In terms of assembly, monomeric.

Its subcellular location is the cytoplasm. It localises to the sarcoplasm. It carries out the reaction Fe(III)-heme b-[protein] + nitric oxide + H2O = Fe(II)-heme b-[protein] + nitrite + 2 H(+). The enzyme catalyses H2O2 + AH2 = A + 2 H2O. Monomeric heme protein which primary function is to store oxygen and facilitate its diffusion within muscle tissues. Reversibly binds oxygen through a pentacoordinated heme iron and enables its timely and efficient release as needed during periods of heightened demand. Depending on the oxidative conditions of tissues and cells, and in addition to its ability to bind oxygen, it also has a nitrite reductase activity whereby it regulates the production of bioactive nitric oxide. Under stress conditions, like hypoxia and anoxia, it also protects cells against reactive oxygen species thanks to its pseudoperoxidase activity. The chain is Myoglobin (MB) from Saimiri sciureus (Common squirrel monkey).